The following is a 460-amino-acid chain: Ribulose bisphosphate carboxylase (460 aa).

Asn-112 lines the substrate pocket. Catalysis depends on Lys-167, which acts as the Proton acceptor. Lys-169 is a binding site for substrate. Residues Lys-192, Asp-194, and Glu-195 each contribute to the Mg(2+) site. Lys-192 carries the post-translational modification N6-carboxylysine. His-288 serves as the catalytic Proton acceptor. Arg-289, His-322, and Ser-369 together coordinate substrate.

It belongs to the RuBisCO large chain family. Type II subfamily. Homodimer. Requires Mg(2+) as cofactor.

The catalysed reaction is 2 (2R)-3-phosphoglycerate + 2 H(+) = D-ribulose 1,5-bisphosphate + CO2 + H2O. It carries out the reaction D-ribulose 1,5-bisphosphate + O2 = 2-phosphoglycolate + (2R)-3-phosphoglycerate + 2 H(+). Functionally, ruBisCO catalyzes two reactions: the carboxylation of D-ribulose 1,5-bisphosphate, the primary event in carbon dioxide fixation, as well as the oxidative fragmentation of the pentose substrate. Both reactions occur simultaneously and in competition at the same active site. The chain is Ribulose bisphosphate carboxylase from Rhodopseudomonas palustris (strain BisA53).